A 719-amino-acid chain; its full sequence is Potassium channel KOR2 (719 aa).

At 1 to 63 the chain is on the cytoplasmic side; it reads MAEEYELNEI…VIHPNGRWYR (63 aa). Residues 64-84 form a helical membrane-spanning segment; sequence IWANMMFLWSIYSTFFTPFEF. Over 85-93 the chain is Extracellular; sequence SFFRGLPDQ. The helical transmembrane segment at 94-114 threads the bilayer; it reads LLDLECVQLVFLADVAVHFFL. At 115–137 the chain is on the cytoplasmic side; sequence AYRDPHTYRMVHDKRHIALRYIK. Residues 138 to 158 traverse the membrane as a helical segment; sequence GSFALDVLGCFPWDAIYKVTG. At 159 to 164 the chain is on the extracellular side; the sequence is RVEAVR. The helical; Voltage-sensor transmembrane segment at 165-185 threads the bilayer; that stretch reads WLVWVRLYRGRKVMAFFKRVE. Topologically, residues 186–199 are cytoplasmic; the sequence is KDIRVSYLLTRIVK. The helical transmembrane segment at 200-220 threads the bilayer; sequence LITVELYCTHTAACGFYYLAT. The Extracellular segment spans residues 221–255; the sequence is TLPPAREGGTWIGSLSLGDARYINFREVDLLTRYV. The pore-forming intramembrane region spans 256-275; that stretch reads TSLYLAIVTMATVGYGDIHA. Over 276–285 the chain is Extracellular; the sequence is VNTREMAFTV. The chain crosses the membrane as a helical span at residues 286 to 306; sequence VYISFSIVLSAYLIGNMTALI. Topologically, residues 307–719 are cytoplasmic; it reads VKGSRTERFR…LEQARTVATN (413 aa). 383 to 503 lines the a nucleoside 3',5'-cyclic phosphate pocket; sequence LFRGCSDDFL…SQILSNLLKG (121 aa). ANK repeat units follow at residues 523–556, 560–589, 593–622, 624–653, and 657–686; these read KQES…DPSK, DGRT…NVNS, FGNS…ILNL, DAGG…SPNC, and DQRT…DIQA.

Belongs to the potassium channel family. Plant (TC 1.A.1.4) subfamily.

The protein resides in the membrane. Probable outward-rectifying potassium channel. The sequence is that of Potassium channel KOR2 from Oryza sativa subsp. japonica (Rice).